Here is a 431-residue protein sequence, read N- to C-terminus: 23S rRNA (uracil(1939)-C(5))-methyltransferase RlmD (431 aa).

In terms of domain architecture, TRAM spans 10 to 68; that stretch reads RVTTRQIITVKVNDLDSFGQGVARHNGKALFIPGLLPEESAEVIITEDKKQFARARVSR. Positions 81, 87, 90, and 161 each coordinate [4Fe-4S] cluster. S-adenosyl-L-methionine-binding residues include Gln-264, Phe-293, Asn-298, Glu-314, Asn-341, and Asp-362. Cys-388 acts as the Nucleophile in catalysis.

Belongs to the class I-like SAM-binding methyltransferase superfamily. RNA M5U methyltransferase family. RlmD subfamily.

The catalysed reaction is uridine(1939) in 23S rRNA + S-adenosyl-L-methionine = 5-methyluridine(1939) in 23S rRNA + S-adenosyl-L-homocysteine + H(+). Functionally, catalyzes the formation of 5-methyl-uridine at position 1939 (m5U1939) in 23S rRNA. The polypeptide is 23S rRNA (uracil(1939)-C(5))-methyltransferase RlmD (Salmonella choleraesuis (strain SC-B67)).